The following is a 174-amino-acid chain: Crossover junction endodeoxyribonuclease RuvC (174 aa).

Catalysis depends on residues D16, E76, and D148. Mg(2+) is bound by residues D16, E76, and D148.

Belongs to the RuvC family. Homodimer which binds Holliday junction (HJ) DNA. The HJ becomes 2-fold symmetrical on binding to RuvC with unstacked arms; it has a different conformation from HJ DNA in complex with RuvA. In the full resolvosome a probable DNA-RuvA(4)-RuvB(12)-RuvC(2) complex forms which resolves the HJ. It depends on Mg(2+) as a cofactor.

Its subcellular location is the cytoplasm. The catalysed reaction is Endonucleolytic cleavage at a junction such as a reciprocal single-stranded crossover between two homologous DNA duplexes (Holliday junction).. Its function is as follows. The RuvA-RuvB-RuvC complex processes Holliday junction (HJ) DNA during genetic recombination and DNA repair. Endonuclease that resolves HJ intermediates. Cleaves cruciform DNA by making single-stranded nicks across the HJ at symmetrical positions within the homologous arms, yielding a 5'-phosphate and a 3'-hydroxyl group; requires a central core of homology in the junction. The consensus cleavage sequence is 5'-(A/T)TT(C/G)-3'. Cleavage occurs on the 3'-side of the TT dinucleotide at the point of strand exchange. HJ branch migration catalyzed by RuvA-RuvB allows RuvC to scan DNA until it finds its consensus sequence, where it cleaves and resolves the cruciform DNA. The protein is Crossover junction endodeoxyribonuclease RuvC of Rhodopseudomonas palustris (strain ATCC BAA-98 / CGA009).